The sequence spans 722 residues: Polyribonucleotide nucleotidyltransferase (722 aa).

Mg(2+)-binding residues include D487 and D493. Positions P554–I613 constitute a KH domain. Positions G623–K691 constitute an S1 motif domain. The disordered stretch occupies residues T697–E722. The segment covering L701–G713 has biased composition (basic and acidic residues).

It belongs to the polyribonucleotide nucleotidyltransferase family. Requires Mg(2+) as cofactor.

The protein resides in the cytoplasm. It carries out the reaction RNA(n+1) + phosphate = RNA(n) + a ribonucleoside 5'-diphosphate. Functionally, involved in mRNA degradation. Catalyzes the phosphorolysis of single-stranded polyribonucleotides processively in the 3'- to 5'-direction. The polypeptide is Polyribonucleotide nucleotidyltransferase (Rhodopseudomonas palustris (strain TIE-1)).